The following is a 370-amino-acid chain: Homoserine kinase (370 aa).

The N-terminal 34 residues, M1–R34, are a transit peptide targeting the chloroplast. L143–A154 lines the ATP pocket.

This sequence belongs to the GHMP kinase family. Homoserine kinase subfamily.

It is found in the plastid. The protein localises to the chloroplast stroma. It carries out the reaction L-homoserine + ATP = O-phospho-L-homoserine + ADP + H(+). The protein operates within amino-acid biosynthesis; L-threonine biosynthesis; L-threonine from L-aspartate: step 4/5. Functionally, catalyzes the ATP-dependent phosphorylation of L-homoserine to L-homoserine phosphate. Is specific for L-homoserine and cannot use other substrates such D-serine, L-serine, D-threonine and L-threonine, galactose or D-homoserine in vitro. Required for susceptibility to the downy mildew pathogen Hyaloperonospora parasitica. In Arabidopsis thaliana (Mouse-ear cress), this protein is Homoserine kinase (HSK).